The primary structure comprises 933 residues: Progesterone receptor (933 aa).

Residues 1–157 (MTELKAKGPR…PEDPPAAPAT (157 aa)) are disordered. The interval 1-164 (MTELKAKGPR…PATQRVLSPL (164 aa)) is AF3; mediates transcriptional activation (in isoform B). The modulating, Pro-Rich stretch occupies residues 1–566 (MTELKAKGPR…YSFESLPQKI (566 aa)). Lys-7 is covalently cross-linked (Glycyl lysine isopeptide (Lys-Gly) (interchain with G-Cter in SUMO)). The residue at position 20 (Ser-20) is a Phosphoserine. The LXXL motif 1 motif lies at 55-59 (LDGLL). 2 positions are modified to phosphoserine: Ser-81 and Ser-102. Residues 115–119 (LDTLL) carry the LXXL motif 2 motif. Residues Ser-130 and Ser-162 each carry the phosphoserine modification. The mediates transcriptional transrepression (in isoform A) stretch occupies residues 165–305 (MSRSGCKVGD…LATTVMDFIH (141 aa)). The Nuclear localization signal motif lies at 183–187 (KVLPR). Phosphoserine occurs at positions 190 and 213. Residues 195-241 (LLLPASESPHWSGAPVKPSPQAAAVEVEEEDGSESEESAGPLLKGKP) form a disordered region. Positions 220–231 (EVEEEDGSESEE) are enriched in acidic residues. The segment covering 232–241 (SAGPLLKGKP) has biased composition (low complexity). Ser-294 is subject to Phosphoserine; by MAPK1. The segment at 331–351 (GGAGAASAFAPPRSSPCASST) is disordered. Low complexity predominate over residues 335-350 (AASAFAPPRSSPCASS). Position 345 is a phosphoserine; by MAPK (Ser-345). Lys-388 is covalently cross-linked (Glycyl lysine isopeptide (Lys-Gly) (interchain with G-Cter in SUMO); alternate). Lys-388 participates in a covalent cross-link: Glycyl lysine isopeptide (Lys-Gly) (interchain with G-Cter in ubiquitin); alternate. Ser-400 carries the phosphoserine; by CDK2 modification. The tract at residues 415 to 452 (PDFPLGPPPPLPPRATPSRPGEAAVTAAPASASVSSAS) is disordered. Residues 418 to 429 (PLGPPPPLPPRA) show a composition bias toward pro residues. Over residues 430–452 (TPSRPGEAAVTAAPASASVSSAS) the composition is skewed to low complexity. An AF1; mediates transcriptional activation region spans residues 456 to 546 (STLECILYKA…VYPPYLNYLR (91 aa)). A Glycyl lysine isopeptide (Lys-Gly) (interchain with G-Cter in SUMO) cross-link involves residue Lys-531. 2 consecutive NR C4-type zinc fingers follow at residues 567–587 (CLIC…CGSC) and 603–627 (CAGR…LRKC). Positions 567–639 (CLICGDEASG…AGMVLGGRKF (73 aa)) form a DNA-binding region, nuclear receptor. Phosphoserine is present on Ser-676. Residues 679–913 (QDIQLIPPLI…EFPEMMSEVI (235 aa)) enclose the NR LBD domain. Residues 687-933 (LINLLMSIEP…MVKPLLFHKK (247 aa)) are AF2; mediates transcriptional activation. Arg-766 serves as a coordination point for progesterone.

Belongs to the nuclear hormone receptor family. NR3 subfamily. As to quaternary structure, interacts with SMARD1 and UNC45A. Interacts with CUEDC2; the interaction promotes ubiquitination, decreases sumoylation, and represses transcriptional activity. Interacts with PIAS3; the interaction promotes sumoylation of PR in a hormone-dependent manner, inhibits DNA-binding, and alters nuclear export. Interacts with SP1; the interaction requires ligand-induced phosphorylation on Ser-345 by ERK1/2 MAPK. Interacts with PRMT2. Isoform A interacts with NCOR2. Isoform B (but not isoform A) interacts with NCOA2 and NCOA1. Isoform B (but not isoform A) interacts with KLF9. Interacts with GTF2B. Phosphorylated on multiple serine sites. Several of these sites are hormone-dependent. Phosphorylation on Ser-294 occurs preferentially on isoform B, is highly hormone-dependent and modulates ubiquitination and sumoylation on Lys-388. Phosphorylation on Ser-102 and Ser-345 also requires induction by hormone. Basal phosphorylation on Ser-81, Ser-162, Ser-190 and Ser-400 is increased in response to progesterone and can be phosphorylated in vitro by the CDK2-A1 complex. Increased levels of phosphorylation on Ser-400 also in the presence of EGF, heregulin, IGF, PMA and FBS. Phosphorylation at this site by CDK2 is ligand-independent, and increases nuclear translocation and transcriptional activity. Phosphorylation at Ser-162 and Ser-294, but not at Ser-190, is impaired during the G(2)/M phase of the cell cycle. Phosphorylation on Ser-345 by ERK1/2 MAPK is required for interaction with SP1. Post-translationally, sumoylation is hormone-dependent and represses transcriptional activity. Sumoylation on all three sites is enhanced by PIAS3. Desumoylated by SENP1. Sumoylation on Lys-388, the main site of sumoylation, is repressed by ubiquitination on the same site, and modulated by phosphorylation at Ser-294. In terms of processing, ubiquitination is hormone-dependent and represses sumoylation on the same site. Promoted by MAPK-mediated phosphorylation on Ser-294. Ubiquitinated by UBR5, leading to its degradation: UBR5 specifically recognizes and binds ligand-bound PGR when it is not associated with coactivators (NCOAs). In presence of NCOAs, the UBR5-degron is not accessible, preventing its ubiquitination and degradation. Palmitoylated by ZDHHC7 and ZDHHC21. Palmitoylation is required for plasma membrane targeting and for rapid intracellular signaling via ERK and AKT kinases and cAMP generation. As to expression, in reproductive tissues the expression of isoform A and isoform B varies as a consequence of developmental and hormonal status. Isoform A and isoform B are expressed in comparable levels in uterine glandular epithelium during the proliferative phase of the menstrual cycle. Expression of isoform B but not of isoform A persists in the glands during mid-secretory phase. In the stroma, isoform A is the predominant form throughout the cycle. Heterogeneous isoform expression between the glands of the endometrium basalis and functionalis is implying region-specific responses to hormonal stimuli.

It is found in the nucleus. It localises to the cytoplasm. Its subcellular location is the mitochondrion outer membrane. Its function is as follows. The steroid hormones and their receptors are involved in the regulation of eukaryotic gene expression and affect cellular proliferation and differentiation in target tissues. Depending on the isoform, progesterone receptor functions as a transcriptional activator or repressor. In terms of biological role, ligand-dependent transdominant repressor of steroid hormone receptor transcriptional activity including repression of its isoform B, MR and ER. Transrepressional activity may involve recruitment of corepressor NCOR2. Functionally, transcriptional activator of several progesteron-dependent promoters in a variety of cell types. Involved in activation of SRC-dependent MAPK signaling on hormone stimulation. Increases mitochondrial membrane potential and cellular respiration upon stimulation by progesterone. The chain is Progesterone receptor (PGR) from Homo sapiens (Human).